The sequence spans 874 residues: Protein translocase subunit SecA (874 aa).

Residues Gln-85, 103–107 (GEGKT), and Asp-492 each bind ATP. A compositionally biased stretch (basic and acidic residues) spans 839 to 854 (EEGPKKPYRREQKIGR). A disordered region spans residues 839–864 (EEGPKKPYRREQKIGRNDPCPCGSGK). Residues Cys-858, Cys-860, Cys-869, and Cys-870 each coordinate Zn(2+).

The protein belongs to the SecA family. Monomer and homodimer. Part of the essential Sec protein translocation apparatus which comprises SecA, SecYEG and auxiliary proteins SecDF. Other proteins may also be involved. It depends on Zn(2+) as a cofactor.

It localises to the cell membrane. The protein resides in the cytoplasm. The enzyme catalyses ATP + H2O + cellular proteinSide 1 = ADP + phosphate + cellular proteinSide 2.. In terms of biological role, part of the Sec protein translocase complex. Interacts with the SecYEG preprotein conducting channel. Has a central role in coupling the hydrolysis of ATP to the transfer of proteins into and across the cell membrane, serving as an ATP-driven molecular motor driving the stepwise translocation of polypeptide chains across the membrane. This is Protein translocase subunit SecA from Carboxydothermus hydrogenoformans (strain ATCC BAA-161 / DSM 6008 / Z-2901).